We begin with the raw amino-acid sequence, 619 residues long: Kinesin light chain 4 (619 aa).

S2 is modified (N-acetylserine). A coiled-coil region spans residues 32–150; that stretch reads GLESLHSEHQ…EEEKKHLEFL (119 aa). The stretch at 55-88 is one TPR 1 repeat; it reads QQGGHEEGLVHEKARQLRRSMENIELGLSEAQVM. Positions 156–175 are enriched in basic and acidic residues; it reads YDEDGHSMEEKEGDASKDSL. The tract at residues 156–200 is disordered; it reads YDEDGHSMEEKEGDASKDSLDDLFPNEEEEDSSNDLSRGQGAAAA. A Phosphoserine modification is found at S174. A compositionally biased stretch (acidic residues) spans 179–188; the sequence is FPNEEEEDSS. 5 TPR repeats span residues 211 to 244, 253 to 286, 295 to 328, 337 to 370, and 379 to 412; these read LRTL…LERT, ATML…REST, AATL…REKV, AKQL…YERQ, and ARTK…AHVQ. S460 is subject to Phosphoserine. Residues 464 to 497 form a TPR 7 repeat; the sequence is NTTLRNLGALYRRQGKLEAAETLEECALRSRKQG. Residues S565, S566, and S590 each carry the phosphoserine modification. The interval 571–619 is disordered; sequence RKLQGTEPRPSSSNMKRAASLNYLNQPNAAPLQTSRGLSASTVDLSSSS. Residues 592–608 are compositionally biased toward polar residues; sequence NYLNQPNAAPLQTSRGL. Residues 609–619 show a composition bias toward low complexity; sequence SASTVDLSSSS. T612 carries the post-translational modification Phosphothreonine.

It belongs to the kinesin light chain family. Oligomeric complex composed of two heavy chains and two light chains.

It localises to the cytoplasm. The protein localises to the cytoskeleton. In terms of biological role, kinesin is a microtubule-associated force-producing protein that may play a role in organelle transport. The light chain may function in coupling of cargo to the heavy chain or in the modulation of its ATPase activity. This Rattus norvegicus (Rat) protein is Kinesin light chain 4 (Klc4).